Here is a 295-residue protein sequence, read N- to C-terminus: Nitrogenase iron protein (295 aa).

10–17 (GKGGIGKS) is a binding site for ATP. Residue C98 coordinates [4Fe-4S] cluster. The residue at position 101 (R101) is an ADP-ribosylarginine; by dinitrogenase reductase ADP-ribosyltransferase. Residue C133 participates in [4Fe-4S] cluster binding.

Belongs to the NifH/BchL/ChlL family. Homodimer. The cofactor is [4Fe-4S] cluster. Post-translationally, the reversible ADP-ribosylation of Arg-101 inactivates the nitrogenase reductase and regulates nitrogenase activity.

The catalysed reaction is N2 + 8 reduced [2Fe-2S]-[ferredoxin] + 16 ATP + 16 H2O = H2 + 8 oxidized [2Fe-2S]-[ferredoxin] + 2 NH4(+) + 16 ADP + 16 phosphate + 6 H(+). In terms of biological role, the key enzymatic reactions in nitrogen fixation are catalyzed by the nitrogenase complex, which has 2 components: the iron protein and the molybdenum-iron protein. The chain is Nitrogenase iron protein from Tolumonas auensis (strain DSM 9187 / NBRC 110442 / TA 4).